The chain runs to 126 residues: Glycine cleavage system H protein (126 aa).

Residues 22 to 104 (KAYIGITSFA…YEQAWMIVVE (83 aa)) enclose the Lipoyl-binding domain. Lys63 carries the N6-lipoyllysine modification.

This sequence belongs to the GcvH family. The glycine cleavage system is composed of four proteins: P, T, L and H. (R)-lipoate serves as cofactor.

The glycine cleavage system catalyzes the degradation of glycine. The H protein shuttles the methylamine group of glycine from the P protein to the T protein. In terms of biological role, is also involved in protein lipoylation via its role as an octanoyl/lipoyl carrier protein intermediate. In Brevibacillus brevis (strain 47 / JCM 6285 / NBRC 100599), this protein is Glycine cleavage system H protein.